The following is a 357-amino-acid chain: DNA replication and repair protein RecF (357 aa).

ATP is bound at residue 30–37 (GANGSGKT).

The protein belongs to the RecF family.

The protein resides in the cytoplasm. Functionally, the RecF protein is involved in DNA metabolism; it is required for DNA replication and normal SOS inducibility. RecF binds preferentially to single-stranded, linear DNA. It also seems to bind ATP. In Salmonella schwarzengrund (strain CVM19633), this protein is DNA replication and repair protein RecF.